The chain runs to 302 residues: Mitochondrial glycine transporter (302 aa).

Solcar repeat units lie at residues 22–112 (HPVF…LKHH), 119–203 (PKPL…AKKL), and 213–297 (FSPV…MMEK). Helical transmembrane passes span 28-53 (FVCG…TRLQ), 87-113 (GVSP…KHHF), 125-150 (VMLG…TRYE), 178-201 (GLTA…TRAK), 217-243 (LNFG…KTHI), and 272-290 (GGLP…AWTV).

This sequence belongs to the mitochondrial carrier (TC 2.A.29) family. SLC25A38 subfamily.

The protein resides in the mitochondrion inner membrane. The catalysed reaction is glycine(in) = glycine(out). Functionally, mitochondrial glycine transporter that imports glycine into the mitochondrial matrix. Plays an important role in providing glycine for the first enzymatic step in heme biosynthesis, the condensation of glycine with succinyl-CoA to produce 5-aminolevulinate (ALA) in the mitochondrial matrix. Required during erythropoiesis. May play a role as pro-apoptotic protein that induces caspase-dependent apoptosis. The sequence is that of Mitochondrial glycine transporter from Xenopus tropicalis (Western clawed frog).